The chain runs to 99 residues: DNA-directed RNA polymerase subunit omega (99 aa).

Belongs to the RNA polymerase subunit omega family. In terms of assembly, the RNAP catalytic core consists of 2 alpha, 1 beta, 1 beta' and 1 omega subunit. When a sigma factor is associated with the core the holoenzyme is formed, which can initiate transcription.

The catalysed reaction is RNA(n) + a ribonucleoside 5'-triphosphate = RNA(n+1) + diphosphate. Promotes RNA polymerase assembly. Latches the N- and C-terminal regions of the beta' subunit thereby facilitating its interaction with the beta and alpha subunits. In Deinococcus radiodurans (strain ATCC 13939 / DSM 20539 / JCM 16871 / CCUG 27074 / LMG 4051 / NBRC 15346 / NCIMB 9279 / VKM B-1422 / R1), this protein is DNA-directed RNA polymerase subunit omega (rpoZ).